A 261-amino-acid polypeptide reads, in one-letter code: Precorrin-6A synthase [deacetylating] (261 aa).

It carries out the reaction precorrin-5 + S-adenosyl-L-methionine + H2O = precorrin-6A + acetate + S-adenosyl-L-homocysteine + 2 H(+). The protein operates within cofactor biosynthesis; adenosylcobalamin biosynthesis; cob(II)yrinate a,c-diamide from precorrin-2 (aerobic route): step 5/10. In terms of biological role, catalyzes the methylation of C-1 in precorrin-5 and the subsequent extrusion of acetic acid from the resulting intermediate to form cobalt-precorrin-6A. This Sinorhizobium sp protein is Precorrin-6A synthase [deacetylating] (cobF).